The chain runs to 350 residues: Probable deoxyhypusine synthase (350 aa).

NAD(+) contacts are provided by residues 96-100 (SNLIS), 122-124 (TAG), glutamate 128, and aspartate 229. A spermidine-binding site is contributed by 127–128 (EE). Aspartate 234 is a spermidine binding site. Glycine 276 lines the NAD(+) pocket. Spermidine is bound at residue histidine 281. 301–302 (SA) is a binding site for NAD(+). Residues 307 to 309 (GSD) and 316 to 322 (EAVSWGK) contribute to the spermidine site. Lysine 322 functions as the Nucleophile in the catalytic mechanism. 335-336 (EV) is a binding site for NAD(+).

The protein belongs to the deoxyhypusine synthase family. The cofactor is NAD(+).

It catalyses the reaction [eIF5A protein]-L-lysine + spermidine = [eIF5A protein]-deoxyhypusine + propane-1,3-diamine. It participates in protein modification; eIF5A hypusination. Functionally, catalyzes the NAD-dependent oxidative cleavage of spermidine and the subsequent transfer of the butylamine moiety of spermidine to the epsilon-amino group of a specific lysine residue of the eIF-5A precursor protein to form the intermediate deoxyhypusine residue. The sequence is that of Probable deoxyhypusine synthase from Schizosaccharomyces pombe (strain 972 / ATCC 24843) (Fission yeast).